A 270-amino-acid chain; its full sequence is Monofunctional glycosyltransferase (270 aa).

Residues 1–35 form a disordered region; that stretch reads MKRSDRYKTYNKPNDSNDSNQLHHNTYFKPVNKPQ. A compositionally biased stretch (polar residues) spans 11 to 24; sequence NKPNDSNDSNQLHH. A helical membrane pass occupies residues 47 to 67; that stretch reads LLIPILIIIGIIIGVMYALSL.

It belongs to the glycosyltransferase 51 family.

It is found in the cell membrane. The enzyme catalyses [GlcNAc-(1-&gt;4)-Mur2Ac(oyl-L-Ala-gamma-D-Glu-L-Lys-D-Ala-D-Ala)](n)-di-trans,octa-cis-undecaprenyl diphosphate + beta-D-GlcNAc-(1-&gt;4)-Mur2Ac(oyl-L-Ala-gamma-D-Glu-L-Lys-D-Ala-D-Ala)-di-trans,octa-cis-undecaprenyl diphosphate = [GlcNAc-(1-&gt;4)-Mur2Ac(oyl-L-Ala-gamma-D-Glu-L-Lys-D-Ala-D-Ala)](n+1)-di-trans,octa-cis-undecaprenyl diphosphate + di-trans,octa-cis-undecaprenyl diphosphate + H(+). It functions in the pathway cell wall biogenesis; peptidoglycan biosynthesis. Its function is as follows. Peptidoglycan polymerase that catalyzes glycan chain elongation using lipid-linked disaccharide-pentapeptide as the substrate. This Staphylococcus saprophyticus subsp. saprophyticus (strain ATCC 15305 / DSM 20229 / NCIMB 8711 / NCTC 7292 / S-41) protein is Monofunctional glycosyltransferase.